A 131-amino-acid polypeptide reads, in one-letter code: Small ribosomal subunit protein uS11 (131 aa).

Belongs to the universal ribosomal protein uS11 family. In terms of assembly, part of the 30S ribosomal subunit. Interacts with proteins S7 and S18. Binds to IF-3.

Its function is as follows. Located on the platform of the 30S subunit, it bridges several disparate RNA helices of the 16S rRNA. Forms part of the Shine-Dalgarno cleft in the 70S ribosome. This Clostridium acetobutylicum (strain ATCC 824 / DSM 792 / JCM 1419 / IAM 19013 / LMG 5710 / NBRC 13948 / NRRL B-527 / VKM B-1787 / 2291 / W) protein is Small ribosomal subunit protein uS11.